Consider the following 607-residue polypeptide: UvrABC system protein C (607 aa).

Residues 11-89 (CKPGVYRFED…IKEFAPPCNV (79 aa)) enclose the GIY-YIG domain. One can recognise a UVR domain in the interval 201 to 236 (SSLLESLKKKMLKASKNKEYEEAAILRDKIQAAQTV).

It belongs to the UvrC family. As to quaternary structure, interacts with UvrB in an incision complex.

The protein resides in the cytoplasm. The UvrABC repair system catalyzes the recognition and processing of DNA lesions. UvrC both incises the 5' and 3' sides of the lesion. The N-terminal half is responsible for the 3' incision and the C-terminal half is responsible for the 5' incision. In Tropheryma whipplei (strain Twist) (Whipple's bacillus), this protein is UvrABC system protein C.